We begin with the raw amino-acid sequence, 245 residues long: Probable transcriptional regulatory protein NSE_0641 (245 aa).

The interval 1–22 is disordered; sequence MAGHSQYANIKHRKNAQDAKRA.

The protein belongs to the TACO1 family.

It is found in the cytoplasm. The chain is Probable transcriptional regulatory protein NSE_0641 from Neorickettsia sennetsu (strain ATCC VR-367 / Miyayama) (Ehrlichia sennetsu).